The chain runs to 513 residues: Maturase K (513 aa).

This sequence belongs to the intron maturase 2 family. MatK subfamily.

The protein resides in the plastid. The protein localises to the chloroplast. Functionally, usually encoded in the trnK tRNA gene intron. Probably assists in splicing its own and other chloroplast group II introns. In Saccharum officinarum (Sugarcane), this protein is Maturase K.